A 308-amino-acid chain; its full sequence is Olfactory receptor 2D2 (308 aa).

Topologically, residues 1–25 (MRQINQTQVTEFLLLGLSDGPHTEQ) are extracellular. Residue Asn-5 is glycosylated (N-linked (GlcNAc...) asparagine). Residues 26–49 (LLFIVLLGVYLVTVLGNLLLISLV) traverse the membrane as a helical segment. At 50-57 (HVDSQLHT) the chain is on the cytoplasmic side. Residues 58-79 (PMYFFLCNLSLADLCFSTNIVP) traverse the membrane as a helical segment. Residues 80–100 (QALVHLLSRKKVIAFTLCAAR) are Extracellular-facing. The helical transmembrane segment at 101-120 (LLFFLIFGCTQCALLAVMSY) threads the bilayer. The Cytoplasmic segment spans residues 121 to 139 (DRYVAICNPLRYPNIMTWK). Residues 140-158 (VCVQLATGSWTSGILVSVV) traverse the membrane as a helical segment. At 159 to 195 (DTTFILRLPYRGSNSIAHFFCEAPALLILASTDTHAS) the chain is on the extracellular side. The helical transmembrane segment at 196–219 (EMAIFLMGVVILLIPVFLILVSYG) threads the bilayer. The Cytoplasmic segment spans residues 220–236 (RIIVTVVKMKSTVGSLK). The helical transmembrane segment at 237-259 (AFSTCGSHLMVVILFYGSAIITY) threads the bilayer. The Extracellular segment spans residues 260–270 (MTPKSSKQQEK). Residues 271 to 290 (SVSVFYAIVTPMLNPLIYSL) form a helical membrane-spanning segment. Over 291 to 308 (RNKDVKAALRKVATRNFP) the chain is Cytoplasmic.

The protein belongs to the G-protein coupled receptor 1 family.

The protein localises to the cell membrane. In terms of biological role, odorant receptor. The polypeptide is Olfactory receptor 2D2 (OR2D2) (Homo sapiens (Human)).